The primary structure comprises 213 residues: Pyridoxine/pyridoxamine 5'-phosphate oxidase (213 aa).

Substrate contacts are provided by residues 8–11 (RREY) and Lys-67. FMN-binding positions include 62–67 (RIVLLK), 77–78 (FT), Arg-83, Lys-84, and Gln-106. Substrate is bound by residues Tyr-124, Arg-128, and Ser-132. FMN-binding positions include 141-142 (QS) and Trp-186. Residue 192–194 (RLH) participates in substrate binding. Position 196 (Arg-196) interacts with FMN.

The protein belongs to the pyridoxamine 5'-phosphate oxidase family. Homodimer. Requires FMN as cofactor.

The catalysed reaction is pyridoxamine 5'-phosphate + O2 + H2O = pyridoxal 5'-phosphate + H2O2 + NH4(+). It catalyses the reaction pyridoxine 5'-phosphate + O2 = pyridoxal 5'-phosphate + H2O2. Its pathway is cofactor metabolism; pyridoxal 5'-phosphate salvage; pyridoxal 5'-phosphate from pyridoxamine 5'-phosphate: step 1/1. It functions in the pathway cofactor metabolism; pyridoxal 5'-phosphate salvage; pyridoxal 5'-phosphate from pyridoxine 5'-phosphate: step 1/1. Its function is as follows. Catalyzes the oxidation of either pyridoxine 5'-phosphate (PNP) or pyridoxamine 5'-phosphate (PMP) into pyridoxal 5'-phosphate (PLP). The polypeptide is Pyridoxine/pyridoxamine 5'-phosphate oxidase (Shewanella woodyi (strain ATCC 51908 / MS32)).